Reading from the N-terminus, the 248-residue chain is Small ribosomal subunit protein uS2 (248 aa).

The protein belongs to the universal ribosomal protein uS2 family.

The protein is Small ribosomal subunit protein uS2 of Thiobacillus denitrificans (strain ATCC 25259 / T1).